Consider the following 949-residue polypeptide: Thrombospondin-4-B (949 aa).

An N-terminal signal peptide occupies residues 1-22; it reads MAGTMHLLTAVSLILMLSSANA. Residues 23–198 form the Laminin G-like domain; it reads ESTVYNLLTS…LEELKLAYGD (176 aa). 21 disulfides stabilise this stretch: C276–C287, C281–C296, C299–C310, C316–C327, C321–C336, C339–C363, C369–C383, C377–C392, C395–C407, C413–C427, C421–C437, C439–C450, C466–C471, C476–C496, C512–C532, C535–C555, C571–C591, C594–C614, C632–C652, C672–C692, and C708–C929. One can recognise an EGF-like 1; calcium-binding domain in the interval 312-349; sequence DVDECQFNPCFPGVRCVNMAPGFRCEACPLGFTGKPLE. Residues 365–408 enclose the EGF-like 2; calcium-binding domain; the sequence is DIDECKGPDNGGCTANSICVNSVGSYQCGRCKTGFTGDQIRGCK. The region spanning 409–451 is the EGF-like 3 domain; sequence PEKSCGNRLQNPCDPNAQCTEERDGTITCQCGIGWAGNGYLCG. TSP type-3 repeat units lie at residues 452 to 484, 485 to 520, 521 to 543, 544 to 579, 580 to 602, 603 to 640, 641 to 680, and 681 to 716; these read KDTD…NSGQ, EDAD…NINQ, QNSD…NPDQ, RDTD…NRDQ, LDRD…NPNQ, SDID…NSSQ, LDTD…NPEQ, and IDDN…EITL. The tract at residues 578 to 671 is disordered; it reads DQLDRDGDGV…PDSLPPGPDN (94 aa). N601 and N637 each carry an N-linked (GlcNAc...) asparagine glycan. The span at 649-660 shows a compositional bias: acidic residues; the sequence is GDECDDDDDNDG. The region spanning 720–934 is the TSP C-terminal domain; sequence RAYQTVVLDP…LKYRCNDTIP (215 aa). N930 carries an N-linked (GlcNAc...) asparagine glycan.

It belongs to the thrombospondin family. Homotrimer; disulfide-linked.

The protein localises to the endoplasmic reticulum. It localises to the sarcoplasmic reticulum. The protein resides in the secreted. Its subcellular location is the extracellular space. It is found in the extracellular matrix. Functionally, adhesive glycoprotein that mediates cell-to-cell and cell-to-matrix interactions and may be involved in various processes including cellular proliferation, migration, adhesion and attachment. May play a role in ER stress response. This is Thrombospondin-4-B (thbs4b) from Danio rerio (Zebrafish).